A 296-amino-acid polypeptide reads, in one-letter code: uncharacterized protein (296 aa).

Positions 1 to 20 (MRKFIFVLLTLLLVSPFSFA) are cleaved as a signal peptide.

This is an uncharacterized protein from Escherichia coli (strain K12).